A 122-amino-acid polypeptide reads, in one-letter code: UPF0102 protein RL0336 (122 aa).

This sequence belongs to the UPF0102 family.

This is UPF0102 protein RL0336 from Rhizobium johnstonii (strain DSM 114642 / LMG 32736 / 3841) (Rhizobium leguminosarum bv. viciae).